Consider the following 198-residue polypeptide: Recombination protein RecR (198 aa).

The C4-type zinc finger occupies 58–73; sequence CSVCGNYTDTDPCAIC. The Toprim domain occupies 81-175; sequence SLVCVVEEPK…KVTRIAHGIP (95 aa).

The protein belongs to the RecR family.

Its function is as follows. May play a role in DNA repair. It seems to be involved in an RecBC-independent recombinational process of DNA repair. It may act with RecF and RecO. This Clostridium acetobutylicum (strain ATCC 824 / DSM 792 / JCM 1419 / IAM 19013 / LMG 5710 / NBRC 13948 / NRRL B-527 / VKM B-1787 / 2291 / W) protein is Recombination protein RecR.